A 218-amino-acid polypeptide reads, in one-letter code: Protein-L-isoaspartate O-methyltransferase (218 aa).

S66 is an active-site residue.

The protein belongs to the methyltransferase superfamily. L-isoaspartyl/D-aspartyl protein methyltransferase family.

Its subcellular location is the cytoplasm. It catalyses the reaction [protein]-L-isoaspartate + S-adenosyl-L-methionine = [protein]-L-isoaspartate alpha-methyl ester + S-adenosyl-L-homocysteine. Its function is as follows. Catalyzes the methyl esterification of L-isoaspartyl residues in peptides and proteins that result from spontaneous decomposition of normal L-aspartyl and L-asparaginyl residues. It plays a role in the repair and/or degradation of damaged proteins. The sequence is that of Protein-L-isoaspartate O-methyltransferase from Caulobacter sp. (strain K31).